We begin with the raw amino-acid sequence, 515 residues long: Galactose/methyl galactoside import ATP-binding protein MglA (515 aa).

ABC transporter domains are found at residues 8–243 (LEMR…VGRE) and 254–499 (IPKE…AKYL). 40-47 (GENGAGKS) contributes to the ATP binding site.

Belongs to the ABC transporter superfamily. Galactose/methyl galactoside importer (TC 3.A.1.2.3) family. The complex is composed of one ATP-binding protein (MglA), two transmembrane proteins (MglC) and a solute-binding protein (MglB).

The protein localises to the cell membrane. It carries out the reaction D-galactose(out) + ATP + H2O = D-galactose(in) + ADP + phosphate + H(+). It catalyses the reaction methyl beta-D-galactoside(out) + ATP + H2O = methyl beta-D-galactoside(in) + ADP + phosphate + H(+). In terms of biological role, part of the ABC transporter complex MglABC involved in galactose/methyl galactoside import. Responsible for energy coupling to the transport system. This is Galactose/methyl galactoside import ATP-binding protein MglA from Clostridium perfringens (strain 13 / Type A).